We begin with the raw amino-acid sequence, 129 residues long: Lysozyme C (129 aa).

In terms of domain architecture, C-type lysozyme spans 1–129; sequence KVFGRCELAA…VRVWIKGCRL (129 aa). Disulfide bonds link cysteine 6–cysteine 127, cysteine 30–cysteine 115, cysteine 64–cysteine 80, and cysteine 76–cysteine 94. Catalysis depends on residues glutamate 35 and aspartate 52.

It belongs to the glycosyl hydrolase 22 family. Monomer.

The protein localises to the secreted. It catalyses the reaction Hydrolysis of (1-&gt;4)-beta-linkages between N-acetylmuramic acid and N-acetyl-D-glucosamine residues in a peptidoglycan and between N-acetyl-D-glucosamine residues in chitodextrins.. Functionally, lysozymes have primarily a bacteriolytic function; those in tissues and body fluids are associated with the monocyte-macrophage system and enhance the activity of immunoagents. The sequence is that of Lysozyme C (LYZ) from Numida meleagris (Helmeted guineafowl).